The chain runs to 519 residues: Putative glucosylceramidase 4 (519 aa).

Residues Met1–Ser24 form the signal peptide. Glu256 serves as the catalytic Proton donor. Glu361 serves as the catalytic Nucleophile.

Belongs to the glycosyl hydrolase 30 family.

The enzyme catalyses a beta-D-glucosylceramide + H2O = an N-acyl-sphingoid base + D-glucose. The catalysed reaction is a beta-D-glucosyl-(1&lt;-&gt;1')-N-acylsphing-4-enine + H2O = an N-acylsphing-4-enine + D-glucose. It catalyses the reaction an N-acyl-1-beta-D-glucosyl-15-methylhexadecasphing-4-enine + H2O = an N-acyl-15-methylhexadecasphing-4-enine + D-glucose. Its pathway is lipid metabolism; sphingolipid metabolism. Glucosylceramidase that catalyzes the hydrolysis of glucosylceramides into free ceramides and glucose. C.elegans contains specific sphingoid bases, which are unique or different in structure compared to the sphingoid bases found in other animals. Two examples of these distinctive compounds are: 15-methylhexadecasphinganine and 15-methylhexadecasphing-4-enine. This chain is Putative glucosylceramidase 4 (gba-4), found in Caenorhabditis elegans.